We begin with the raw amino-acid sequence, 134 residues long: Transcription antitermination protein NusB (134 aa).

The protein belongs to the NusB family.

Functionally, involved in transcription antitermination. Required for transcription of ribosomal RNA (rRNA) genes. Binds specifically to the boxA antiterminator sequence of the ribosomal RNA (rrn) operons. This chain is Transcription antitermination protein NusB, found in Shewanella oneidensis (strain ATCC 700550 / JCM 31522 / CIP 106686 / LMG 19005 / NCIMB 14063 / MR-1).